The sequence spans 481 residues: Ribulose bisphosphate carboxylase large chain (481 aa).

A propeptide spanning residues 1 to 2 (MS) is cleaved from the precursor. Proline 3 carries the N-acetylproline modification. An N6,N6,N6-trimethyllysine modification is found at lysine 14. The substrate site is built by asparagine 123 and threonine 173. The active-site Proton acceptor is the lysine 175. Substrate is bound at residue lysine 177. Mg(2+) is bound by residues lysine 201, aspartate 203, and glutamate 204. Lysine 201 is modified (N6-carboxylysine). The Proton acceptor role is filled by histidine 294. Substrate-binding residues include arginine 295, histidine 327, and serine 379.

This sequence belongs to the RuBisCO large chain family. Type I subfamily. In terms of assembly, heterohexadecamer of 8 large chains and 8 small chains; disulfide-linked. The disulfide link is formed within the large subunit homodimers. Mg(2+) serves as cofactor. In terms of processing, the disulfide bond which can form in the large chain dimeric partners within the hexadecamer appears to be associated with oxidative stress and protein turnover.

The protein resides in the plastid. It carries out the reaction 2 (2R)-3-phosphoglycerate + 2 H(+) = D-ribulose 1,5-bisphosphate + CO2 + H2O. The catalysed reaction is D-ribulose 1,5-bisphosphate + O2 = 2-phosphoglycolate + (2R)-3-phosphoglycerate + 2 H(+). In terms of biological role, ruBisCO catalyzes two reactions: the carboxylation of D-ribulose 1,5-bisphosphate, the primary event in carbon dioxide fixation, as well as the oxidative fragmentation of the pentose substrate in the photorespiration process. Both reactions occur simultaneously and in competition at the same active site. The protein is Ribulose bisphosphate carboxylase large chain of Cuscuta obtusiflora (Peruvian dodder).